A 137-amino-acid polypeptide reads, in one-letter code: uncharacterized protein (137 aa).

The tract at residues 31 to 83 is disordered; it reads PASPINDKEKDKAGGRLPSGSEPRARAFCEAGADGEQGDPSPADTIKANQGHI.

This is an uncharacterized protein from Homo sapiens (Human).